The primary structure comprises 1034 residues: Putative beta-glucuronidase (1034 aa).

The active-site Proton donor is Glu-432. The CBM6 domain occupies 909-1034; sequence VDISAEEGVL…GPFIDELFID (126 aa).

Belongs to the glycosyl hydrolase 2 family.

It localises to the cytoplasm. The catalysed reaction is a beta-D-glucuronoside + H2O = D-glucuronate + an alcohol. Glycoside hydrolase that may be involved in ulvan degradation. Ulvan is the main polysaccharide component of the Ulvales (green seaweed) cell wall. It is composed of disaccharide building blocks comprising 3-sulfated rhamnose (Rha3S) linked to D-glucuronic acid (GlcA), L-iduronic acid (IduA), or D-xylose (Xyl). The protein is Putative beta-glucuronidase of Formosa agariphila (strain DSM 15362 / KCTC 12365 / LMG 23005 / KMM 3901 / M-2Alg 35-1).